The primary structure comprises 443 residues: Glucose-6-phosphate isomerase (443 aa).

Glutamate 285 serves as the catalytic Proton donor. Catalysis depends on residues histidine 306 and lysine 420.

Belongs to the GPI family.

Its subcellular location is the cytoplasm. The enzyme catalyses alpha-D-glucose 6-phosphate = beta-D-fructose 6-phosphate. The protein operates within carbohydrate biosynthesis; gluconeogenesis. It participates in carbohydrate degradation; glycolysis; D-glyceraldehyde 3-phosphate and glycerone phosphate from D-glucose: step 2/4. Catalyzes the reversible isomerization of glucose-6-phosphate to fructose-6-phosphate. In Staphylococcus aureus (strain USA300), this protein is Glucose-6-phosphate isomerase.